The following is a 135-amino-acid chain: Probable disulfide formation protein (135 aa).

Residues 7-26 traverse the membrane as a helical segment; sequence SYCLYFAWLVSCIGTLMSVY. Cys36 and Cys39 are disulfide-bonded. Transmembrane regions (helical) follow at residues 41-60 and 67-84; these read YQRI…AYLD and YALP…YQVC. Cys96 and Cys101 are disulfide-bonded. Residues 109-131 form a helical membrane-spanning segment; that stretch reads GFITMPMASALAFFAIANLLIFA.

The protein belongs to the DsbB family. BdbC subfamily.

The protein resides in the cell inner membrane. Required for disulfide bond formation in some proteins. The chain is Probable disulfide formation protein from Chlamydia muridarum (strain MoPn / Nigg).